A 463-amino-acid polypeptide reads, in one-letter code: Sodium-coupled neutral amino acid transporter 7 (463 aa).

S28 bears the Phosphoserine mark. 11 helical membrane-spanning segments follow: residues 56 to 76 (AIFIVVNACLGAGLLNFPAAF), 82 to 102 (VAAGITLQMAMLVFIISGLVI), 130 to 150 (LCEVAIATYTFGTCIAFLIII), 179 to 199 (FTISLTAFLFILPLSIPREIG), 206 to 226 (FLSVVGTWYVTAIIIIKYIWP), 240 to 260 (ASWIAVFNAMPTICFGFQCHV), 283 to 303 (AAMVIALAVYMGTGICGFLTF), 320 to 340 (MAVAVARAFIILSVLTSYPIL), 372 to 392 (VLQTLVWFLLTLLLALFIPDI), 396 to 416 (ISVIGGLAACFIFVFPGLCLI), and 429 to 449 (ASWWAMVSYGVLLVTLGAFIF).

This sequence belongs to the amino acid/polyamine transporter 2 family. In terms of assembly, interacts with the mTORC1 complex; this interaction mediates the recruitment of mTORC1 to the lysosome and its subsequent activation.

The protein resides in the lysosome membrane. The protein localises to the cell projection. It localises to the axon. It catalyses the reaction L-asparagine(in) + Na(+)(in) = L-asparagine(out) + Na(+)(out). It carries out the reaction L-glutamine(in) + Na(+)(in) = L-glutamine(out) + Na(+)(out). Functionally, symporter that selectively cotransports sodium ions and amino acids, such as L-glutamine and L-asparagine from the lysosome into the cytoplasm and may participates in mTORC1 activation. The transport activity requires an acidic lysosomal lumen. This Bos taurus (Bovine) protein is Sodium-coupled neutral amino acid transporter 7.